Consider the following 267-residue polypeptide: MHRIAVPAAKGAPTAQAPVKVAARNLDFYYDKYHALKGINIEIPEKRVTALIGPSGCGKSTLLRIFNRIYALYPKLEARGEVLLDGENILSPKYPMNRLRSKVGMVFQKPVPFPMTIFENVAYGIRHHEKLSKADMQNRVEHALRQGALWDEVKDKLGQSALGLSGGQQQRLCIARAVALRPDVLLLDEPTSALDPISTSRIEQLVEELKRDYTIVIVTHNMQQAARVSDYTAFMYLGDLIEHDRTETIFSQPSKQQTEDYITGRFG.

Positions 21-262 constitute an ABC transporter domain; that stretch reads VAARNLDFYY…PSKQQTEDYI (242 aa). 53-60 is an ATP binding site; that stretch reads GPSGCGKS.

The protein belongs to the ABC transporter superfamily. Phosphate importer (TC 3.A.1.7) family. The complex is composed of two ATP-binding proteins (PstB), two transmembrane proteins (PstC and PstA) and a solute-binding protein (PstS).

The protein resides in the cell inner membrane. The enzyme catalyses phosphate(out) + ATP + H2O = ADP + 2 phosphate(in) + H(+). Part of the ABC transporter complex PstSACB involved in phosphate import. Responsible for energy coupling to the transport system. The sequence is that of Phosphate import ATP-binding protein PstB from Xanthomonas campestris pv. campestris (strain 8004).